Consider the following 371-residue polypeptide: Histidinol-phosphate aminotransferase (371 aa).

Lys-228 bears the N6-(pyridoxal phosphate)lysine mark.

This sequence belongs to the class-II pyridoxal-phosphate-dependent aminotransferase family. Histidinol-phosphate aminotransferase subfamily. Requires pyridoxal 5'-phosphate as cofactor.

It carries out the reaction L-histidinol phosphate + 2-oxoglutarate = 3-(imidazol-4-yl)-2-oxopropyl phosphate + L-glutamate. The protein operates within amino-acid biosynthesis; L-histidine biosynthesis; L-histidine from 5-phospho-alpha-D-ribose 1-diphosphate: step 7/9. The sequence is that of Histidinol-phosphate aminotransferase from Methanococcus aeolicus (strain ATCC BAA-1280 / DSM 17508 / OCM 812 / Nankai-3).